The primary structure comprises 152 residues: uncharacterized protein (152 aa).

The next 3 helical transmembrane spans lie at 15–35, 43–63, and 117–137; these read IINV…IYDI, LVVA…LILT, and TFLL…KLLI.

It to M.jannaschii MJ0129 and MJ0587.

Its subcellular location is the cell membrane. This is an uncharacterized protein from Methanocaldococcus jannaschii (strain ATCC 43067 / DSM 2661 / JAL-1 / JCM 10045 / NBRC 100440) (Methanococcus jannaschii).